Consider the following 387-residue polypeptide: Alpha-sarcoglycan (387 aa).

Positions 1–24 are cleaved as a signal peptide; the sequence is MAAAALLWLPLLVGCLAGPGGTEA. Residues 25–290 lie on the Extracellular side of the membrane; the sequence is QQTTLYPLVG…ATARDFLADA (266 aa). N-linked (GlcNAc...) asparagine glycans are attached at residues Asn174 and Asn246. Residues 291–311 traverse the membrane as a helical segment; that stretch reads LVTLLVPLLVALLLALLLAYI. At 312–387 the chain is on the cytoplasmic side; it reads MCCRREGRLK…AQVPLILDQH (76 aa). Ser377 carries the post-translational modification Phosphoserine.

Belongs to the sarcoglycan alpha/epsilon family. As to quaternary structure, cross-link to form 2 major subcomplexes: one consisting of SGCB, SGCD and SGCG and the other consisting of SGCB and SGCD. The association between SGCB and SGCG is particularly strong while SGCA is loosely associated with the other sarcoglycans. Interacts with the syntrophin SNTA1.

It localises to the cell membrane. The protein resides in the sarcolemma. It is found in the cytoplasm. Its subcellular location is the cytoskeleton. In terms of biological role, component of the sarcoglycan complex, a subcomplex of the dystrophin-glycoprotein complex which forms a link between the F-actin cytoskeleton and the extracellular matrix. The sequence is that of Alpha-sarcoglycan (SGCA) from Oryctolagus cuniculus (Rabbit).